The following is a 245-amino-acid chain: tRNA1(Val) (adenine(37)-N6)-methyltransferase (245 aa).

This sequence belongs to the methyltransferase superfamily. tRNA (adenine-N(6)-)-methyltransferase family.

Its subcellular location is the cytoplasm. It catalyses the reaction adenosine(37) in tRNA1(Val) + S-adenosyl-L-methionine = N(6)-methyladenosine(37) in tRNA1(Val) + S-adenosyl-L-homocysteine + H(+). Functionally, specifically methylates the adenine in position 37 of tRNA(1)(Val) (anticodon cmo5UAC). This Salmonella paratyphi C (strain RKS4594) protein is tRNA1(Val) (adenine(37)-N6)-methyltransferase.